Reading from the N-terminus, the 423-residue chain is Gamma-glutamyl phosphate reductase (423 aa).

It belongs to the gamma-glutamyl phosphate reductase family.

The protein localises to the cytoplasm. The enzyme catalyses L-glutamate 5-semialdehyde + phosphate + NADP(+) = L-glutamyl 5-phosphate + NADPH + H(+). It functions in the pathway amino-acid biosynthesis; L-proline biosynthesis; L-glutamate 5-semialdehyde from L-glutamate: step 2/2. Its function is as follows. Catalyzes the NADPH-dependent reduction of L-glutamate 5-phosphate into L-glutamate 5-semialdehyde and phosphate. The product spontaneously undergoes cyclization to form 1-pyrroline-5-carboxylate. This is Gamma-glutamyl phosphate reductase from Burkholderia vietnamiensis (strain G4 / LMG 22486) (Burkholderia cepacia (strain R1808)).